The following is a 565-amino-acid chain: Transcription factor asqA (565 aa).

A fungal transcription factor domain region spans residues 204–273 (MDTAMAQAVR…HSMPALCIDS (70 aa)).

Its subcellular location is the nucleus. In terms of biological role, transcription factor that regulates specifically the 4'-methoxyviridicatin/aspoquinolone biosynthesis cluster. The polypeptide is Transcription factor asqA (Emericella nidulans (strain FGSC A4 / ATCC 38163 / CBS 112.46 / NRRL 194 / M139) (Aspergillus nidulans)).